Reading from the N-terminus, the 322-residue chain is Acetyl-coenzyme A carboxylase carboxyl transferase subunit beta (322 aa).

The 270-residue stretch at 24–293 (LWIKCPDTGQ…PAVEEIAASD (270 aa)) folds into the CoA carboxyltransferase N-terminal domain.

It belongs to the AccD/PCCB family. Acetyl-CoA carboxylase is a heterohexamer composed of biotin carboxyl carrier protein (AccB), biotin carboxylase (AccC) and two subunits each of ACCase subunit alpha (AccA) and ACCase subunit beta (AccD).

The protein localises to the cytoplasm. It catalyses the reaction N(6)-carboxybiotinyl-L-lysyl-[protein] + acetyl-CoA = N(6)-biotinyl-L-lysyl-[protein] + malonyl-CoA. It participates in lipid metabolism; malonyl-CoA biosynthesis; malonyl-CoA from acetyl-CoA: step 1/1. Its function is as follows. Component of the acetyl coenzyme A carboxylase (ACC) complex. Biotin carboxylase (BC) catalyzes the carboxylation of biotin on its carrier protein (BCCP) and then the CO(2) group is transferred by the transcarboxylase to acetyl-CoA to form malonyl-CoA. The protein is Acetyl-coenzyme A carboxylase carboxyl transferase subunit beta of Rhodopseudomonas palustris (strain BisB5).